The following is a 152-amino-acid chain: D-aminoacyl-tRNA deacylase (152 aa).

A Gly-cisPro motif, important for rejection of L-amino acids motif is present at residues 142 to 143 (GP).

The protein belongs to the DTD family. In terms of assembly, homodimer.

The protein localises to the cytoplasm. The enzyme catalyses glycyl-tRNA(Ala) + H2O = tRNA(Ala) + glycine + H(+). The catalysed reaction is a D-aminoacyl-tRNA + H2O = a tRNA + a D-alpha-amino acid + H(+). An aminoacyl-tRNA editing enzyme that deacylates mischarged D-aminoacyl-tRNAs. Also deacylates mischarged glycyl-tRNA(Ala), protecting cells against glycine mischarging by AlaRS. Acts via tRNA-based rather than protein-based catalysis; rejects L-amino acids rather than detecting D-amino acids in the active site. By recycling D-aminoacyl-tRNA to D-amino acids and free tRNA molecules, this enzyme counteracts the toxicity associated with the formation of D-aminoacyl-tRNA entities in vivo and helps enforce protein L-homochirality. The polypeptide is D-aminoacyl-tRNA deacylase (Burkholderia cenocepacia (strain HI2424)).